Here is a 106-residue protein sequence, read N- to C-terminus: UPF0642 protein YBL028C (106 aa).

Over residues 1 to 12 (MAKSLRASSHLN) the composition is skewed to polar residues. Disordered regions lie at residues 1–21 (MAKSLRASSHLNAKSVKRRGV) and 52–106 (KEEQ…FTRF). Over residues 62–72 (DEKKSNEEAPR) the composition is skewed to basic and acidic residues. Basic residues predominate over residues 83–106 (GRHHTYKKAKLMKQSKKKTSFTRF).

The protein belongs to the UPF0642 family.

This chain is UPF0642 protein YBL028C, found in Saccharomyces cerevisiae (strain ATCC 204508 / S288c) (Baker's yeast).